A 276-amino-acid polypeptide reads, in one-letter code: Elongation factor Ts (276 aa).

The involved in Mg(2+) ion dislocation from EF-Tu stretch occupies residues 80–83 (TDFV).

It belongs to the EF-Ts family.

The protein localises to the cytoplasm. Its function is as follows. Associates with the EF-Tu.GDP complex and induces the exchange of GDP to GTP. It remains bound to the aminoacyl-tRNA.EF-Tu.GTP complex up to the GTP hydrolysis stage on the ribosome. The chain is Elongation factor Ts from Acidothermus cellulolyticus (strain ATCC 43068 / DSM 8971 / 11B).